The chain runs to 260 residues: Acyl-[acyl-carrier-protein]--UDP-N-acetylglucosamine O-acyltransferase (260 aa).

It belongs to the transferase hexapeptide repeat family. LpxA subfamily. Homotrimer.

It localises to the cytoplasm. It catalyses the reaction a (3R)-hydroxyacyl-[ACP] + UDP-N-acetyl-alpha-D-glucosamine = a UDP-3-O-[(3R)-3-hydroxyacyl]-N-acetyl-alpha-D-glucosamine + holo-[ACP]. Its pathway is glycolipid biosynthesis; lipid IV(A) biosynthesis; lipid IV(A) from (3R)-3-hydroxytetradecanoyl-[acyl-carrier-protein] and UDP-N-acetyl-alpha-D-glucosamine: step 1/6. Functionally, involved in the biosynthesis of lipid A, a phosphorylated glycolipid that anchors the lipopolysaccharide to the outer membrane of the cell. The sequence is that of Acyl-[acyl-carrier-protein]--UDP-N-acetylglucosamine O-acyltransferase from Aliarcobacter butzleri (strain RM4018) (Arcobacter butzleri).